The following is a 731-amino-acid chain: Probable G-protein coupled receptor 149 (731 aa).

Topologically, residues methionine 1 to tyrosine 35 are extracellular. Residues asparagine 7, asparagine 11, and asparagine 21 are each glycosylated (N-linked (GlcNAc...) asparagine). A helical membrane pass occupies residues leucine 36–isoleucine 56. The Cytoplasmic portion of the chain corresponds to serine 57 to methionine 69. A helical transmembrane segment spans residues leucine 70–phenylalanine 90. Over leucine 91–alanine 109 the chain is Extracellular. Cysteine 105 and cysteine 182 are oxidised to a cystine. Residues leucine 110–tyrosine 132 traverse the membrane as a helical segment. The Cytoplasmic segment spans residues threonine 133–leucine 155. Residues threonine 156–valine 176 traverse the membrane as a helical segment. At arginine 177–serine 189 the chain is on the extracellular side. Residues tyrosine 190–valine 210 traverse the membrane as a helical segment. The Cytoplasmic segment spans residues proline 211 to arginine 310. Residues arginine 234 to serine 271 form a disordered region. A helical membrane pass occupies residues phenylalanine 311 to valine 331. Residues valine 332–proline 342 lie on the Extracellular side of the membrane. Residues leucine 343 to leucine 363 form a helical membrane-spanning segment. At serine 364 to serine 731 the chain is on the cytoplasmic side. A disordered region spans residues asparagine 475–serine 526. Basic and acidic residues-rich tracts occupy residues threonine 479–glycine 497 and glycine 510–serine 526.

The protein belongs to the G-protein coupled receptor 1 family.

The protein resides in the cell membrane. Its function is as follows. Orphan receptor. The polypeptide is Probable G-protein coupled receptor 149 (GPR149) (Homo sapiens (Human)).